The sequence spans 60 residues: Large ribosomal subunit protein uL30 (60 aa).

The protein belongs to the universal ribosomal protein uL30 family. In terms of assembly, part of the 50S ribosomal subunit.

This Levilactobacillus brevis (strain ATCC 367 / BCRC 12310 / CIP 105137 / JCM 1170 / LMG 11437 / NCIMB 947 / NCTC 947) (Lactobacillus brevis) protein is Large ribosomal subunit protein uL30.